Consider the following 237-residue polypeptide: Putative N-acetylmannosamine-6-phosphate 2-epimerase (237 aa).

It belongs to the NanE family.

The enzyme catalyses an N-acyl-D-glucosamine 6-phosphate = an N-acyl-D-mannosamine 6-phosphate. Its pathway is amino-sugar metabolism; N-acetylneuraminate degradation; D-fructose 6-phosphate from N-acetylneuraminate: step 3/5. Converts N-acetylmannosamine-6-phosphate (ManNAc-6-P) to N-acetylglucosamine-6-phosphate (GlcNAc-6-P). The polypeptide is Putative N-acetylmannosamine-6-phosphate 2-epimerase (Caldanaerobacter subterraneus subsp. tengcongensis (strain DSM 15242 / JCM 11007 / NBRC 100824 / MB4) (Thermoanaerobacter tengcongensis)).